Consider the following 819-residue polypeptide: Lon protease (819 aa).

A compositionally biased stretch (polar residues) spans 1–14; it reads MNSTNNTDSQNLDP. A disordered region spans residues 1–41; that stretch reads MNSTNNTDSQNLDPNASEVEKLLDESAEAEEKTDDHTPPSE. Basic and acidic residues predominate over residues 18 to 38; it reads EVEKLLDESAEAEEKTDDHTP. The Lon N-terminal domain occupies 42–239; that stretch reads LFILPLNKRP…KALVLLKKEL (198 aa). ATP is bound at residue 392 to 399; the sequence is GPPGVGKT. A Lon proteolytic domain is found at 634–818; that stretch reads KTPVGVATGL…DDVFKIAFPG (185 aa). Catalysis depends on residues Ser-724 and Lys-767.

This sequence belongs to the peptidase S16 family. Homohexamer. Organized in a ring with a central cavity.

The protein resides in the cytoplasm. The catalysed reaction is Hydrolysis of proteins in presence of ATP.. In terms of biological role, ATP-dependent serine protease that mediates the selective degradation of mutant and abnormal proteins as well as certain short-lived regulatory proteins. Required for cellular homeostasis and for survival from DNA damage and developmental changes induced by stress. Degrades polypeptides processively to yield small peptide fragments that are 5 to 10 amino acids long. Binds to DNA in a double-stranded, site-specific manner. In Chlamydia muridarum (strain MoPn / Nigg), this protein is Lon protease.